The primary structure comprises 5058 residues: ATP-binding cassette sub-family A member 13 (5058 aa).

7 helical membrane passes run 23–43, 3568–3588, 3607–3627, 3648–3668, 3679–3699, 3709–3729, and 3752–3772; these read PVLFLAEFFWPCILFVILTVL, VGFFFPLIMMLTWMVSVASMV, GVHPVIHFLAWFLENMAVLTI, FIVFLFLLDFGMSVVMLSYLL, ALCTSLVYMISFLPYIVLLVL, TFLCLLSTTAFGQGVFFITFL, and FGWVCWMILFDSSLYFLCGWY. One can recognise an ABC transporter 1 domain in the interval 3842–4074; that stretch reads VTLVSVTKEY…YGQGLRLTLT (233 aa). Position 3875–3882 (3875–3882) interacts with ATP; sequence GTNGAGKT. Helical transmembrane passes span 4226 to 4246, 4458 to 4478, 4504 to 4524, 4536 to 4556, 4568 to 4588, 4607 to 4627, and 4651 to 4671; these read TLADLLLPVLFVALAMGLFMV, VALCIVLGFSILSASIGSSVV, FLYDMLFYLVSVCLCVAVIVA, LAATALLLSLFGYATLPWMYL, FISYVSLNFIFGLCTMLITIM, VLKWVFTIFPQFCLGQGLVEL, and MNFLGWIFVQLASQGTVLLLL. The ABC transporter 2 domain occupies 4718 to 4956; the sequence is LVLYNLSKHY…FGDGYTVKVW (239 aa). An ATP-binding site is contributed by 4754–4761; the sequence is GVNGAGKS.

Belongs to the ABC transporter superfamily. As to expression, significantly expressed in the bone marrow, trachea, testis, thyroid and lung as well as in skin fibroblasts.

The protein resides in the cytoplasmic vesicle membrane. It carries out the reaction cholesterol(in) + ATP + H2O = cholesterol(out) + ADP + phosphate + H(+). May mediate the cholesterol and gangliosides transport from the plasma membrane to intracellular vesicles in an ATP hydrolysis dependent manner, thus playing a role in their internalization by endocytic retrograde transport and may also participate in the endocytosis of synaptic vesicle in cortical neurons. This chain is ATP-binding cassette sub-family A member 13, found in Homo sapiens (Human).